Here is a 312-residue protein sequence, read N- to C-terminus: Very-long-chain 3-oxoacyl-CoA reductase (312 aa).

The helical transmembrane segment at 4 to 24 threads the bilayer; it reads ALPAAGFLYWVGAGTVAYLAL. NADP(+) is bound at residue 50–79; sequence GEWAVVTGSTDGIGKSYAEELAKHGMKVVL. 2 helical membrane-spanning segments follow: residues 182–202 and 271–291; these read GAILNISSGSGMLPVPLLTIY and GYLIHALMGSIISNLPSWIYL. Residue serine 189 coordinates substrate. Tyrosine 202 acts as the Proton acceptor in catalysis. A Di-lysine motif motif is present at residues 308 to 312; sequence KTKKN.

This sequence belongs to the short-chain dehydrogenases/reductases (SDR) family. 17-beta-HSD 3 subfamily. As to quaternary structure, interacts with ELOVL1 and LASS2. As to expression, expressed in most tissues tested. Highly expressed in the ovary and mammary. Expressed in platelets.

The protein localises to the endoplasmic reticulum membrane. The enzyme catalyses a very-long-chain (3R)-3-hydroxyacyl-CoA + NADP(+) = a very-long-chain 3-oxoacyl-CoA + NADPH + H(+). It catalyses the reaction 17beta-estradiol + NAD(+) = estrone + NADH + H(+). The catalysed reaction is 17beta-estradiol + NADP(+) = estrone + NADPH + H(+). It carries out the reaction 3-oxooctadecanoyl-CoA + NADPH + H(+) = (3R)-hydroxyoctadecanoyl-CoA + NADP(+). The enzyme catalyses (7Z,10Z,13Z,16Z)-3-oxodocosatetraenoyl-CoA + NADPH + H(+) = (3R)-hydroxy-(7Z,10Z,13Z,16Z)-docosatetraenoyl-CoA + NADP(+). It catalyses the reaction 3-oxo-(7Z,10Z,13Z,16Z,19Z)-docosapentaenoyl-CoA + NADPH + H(+) = (3R)-hydroxy-(7Z,10Z,13Z,16Z,19Z)-docosapentaenoyl-CoA + NADP(+). The catalysed reaction is (8Z,11Z,14Z)-3-oxoeicosatrienoyl-CoA + NADPH + H(+) = (3R)-hydroxy-(8Z,11Z,14Z)-eicosatrienoyl-CoA + NADP(+). It participates in lipid metabolism; fatty acid biosynthesis. Its pathway is steroid biosynthesis; estrogen biosynthesis. Catalyzes the second of the four reactions of the long-chain fatty acids elongation cycle. This endoplasmic reticulum-bound enzymatic process, allows the addition of two carbons to the chain of long- and very long-chain fatty acids/VLCFAs per cycle. This enzyme has a 3-ketoacyl-CoA reductase activity, reducing 3-ketoacyl-CoA to 3-hydroxyacyl-CoA, within each cycle of fatty acid elongation. Thereby, it may participate in the production of VLCFAs of different chain lengths that are involved in multiple biological processes as precursors of membrane lipids and lipid mediators. May also catalyze the transformation of estrone (E1) into estradiol (E2) and play a role in estrogen formation. The chain is Very-long-chain 3-oxoacyl-CoA reductase from Homo sapiens (Human).